The following is a 402-amino-acid chain: Serine/threonine transporter SstT (402 aa).

The next 9 membrane-spanning stretches (helical) occupy residues 19 to 39 (IGVV…AIGL), 43 to 63 (LFVG…VISA), 86 to 106 (TFAA…TLIL), 138 to 158 (AITE…GLAM), 179 to 199 (VVKW…FTSI), 212 to 232 (LLIL…NPII), 287 to 307 (IPLG…ILTL), 327 to 347 (VVAA…LLLI), and 354 to 374 (FGIS…VGVI).

The protein belongs to the dicarboxylate/amino acid:cation symporter (DAACS) (TC 2.A.23) family.

It is found in the cell membrane. It catalyses the reaction L-serine(in) + Na(+)(in) = L-serine(out) + Na(+)(out). The catalysed reaction is L-threonine(in) + Na(+)(in) = L-threonine(out) + Na(+)(out). Involved in the import of serine and threonine into the cell, with the concomitant import of sodium (symport system). The chain is Serine/threonine transporter SstT from Streptococcus agalactiae serotype III (strain NEM316).